A 459-amino-acid polypeptide reads, in one-letter code: Proton-coupled folate transporter (459 aa).

At M1 the chain carries N-acetylmethionine. Over 1–25 (MEGRVSPVGSSHRLLTAAVLFRGPV) the chain is Cytoplasmic. Position 6 is a phosphoserine (S6). The chain crosses the membrane as a helical span at residues 26-44 (EPLVFLANFALVLQGPLTT). Residues 45-82 (QYIWHRISTELGYNGTRHRENCGNQSADPVLKEVETLT) lie on the Extracellular side of the membrane. N-linked (GlcNAc...) asparagine glycans are attached at residues N58 and N68. C66 and C298 are disulfide-bonded. Residues 83 to 108 (SHWTLYMNVGGFLVGLFWSTLLGAWS) form a helical membrane-spanning segment. Topologically, residues 109–112 (DRVG) are cytoplasmic. Residues 113–135 (RRPLLVLASLGLLLQAVVSIFVV) traverse the membrane as a helical segment. Residues 136-140 (QLQLH) lie on the Extracellular side of the membrane. A helical membrane pass occupies residues 141 to 154 (IGFFVLGRALCALL). At 155-177 (GDFNGLLAASFASVADVSSNHSR) the chain is on the cytoplasmic side. 2 residues coordinate H(+): D156 and E185. Residues 178-203 (TFRMALLEACIGVAGTLASLLGGHWL) traverse the membrane as a helical segment. Residues 204-208 (RAQGY) lie on the Extracellular side of the membrane. The chain crosses the membrane as a helical span at residues 209–227 (ANPFWLALAVLIVMTLYAA). Residues 228-266 (FCFGETVKEPKSTRLFTLRHHRSIVQLYVVPAPEKSRMH) are Cytoplasmic-facing. The chain crosses the membrane as a helical span at residues 267–289 (LALYSLAIFVVVTVHFGAQDILT). H281 is a binding site for H(+). Topologically, residues 290–302 (LYELSTPLCWDSK) are extracellular. The chain crosses the membrane as a helical span at residues 303 to 325 (LIGYGSAAQHLPYLTSLLGLRLL). Topologically, residues 326-331 (QFCLAD) are cytoplasmic. Residues 332 to 351 (TWVAEIGLAFNILGMVVFAF) form a helical membrane-spanning segment. The Extracellular segment spans residues 352-355 (ATIT). A helical membrane pass occupies residues 356 to 376 (PLMFTGYGLLFLSLVTTPVIR). Topologically, residues 377 to 388 (AKLSKLVSESEQ) are cytoplasmic. A helical membrane pass occupies residues 389-414 (GALFSAVACVNSLAMLMASGIFNSLY). Residues 415 to 422 (PATLNFMK) lie on the Extracellular side of the membrane. Residues 423–441 (GFPFLLGAGLLFIPAILIG) form a helical membrane-spanning segment. The Cytoplasmic portion of the chain corresponds to 442-459 (VLEKVNPHPEFQQFPQNS).

The protein belongs to the major facilitator superfamily. SLC46A family. Monomer. Expressed almost exclusively in the small intestine: expressed at high level in the upper half of the small intestine (duodenum and jejunum), expression decreases downwardly in the subsequent quarter and is undetectable in the last quarter (the lowest ileum). Expressed at low level in other tissues, including liver.

It is found in the cell membrane. It localises to the apical cell membrane. The protein resides in the basolateral cell membrane. Its subcellular location is the endosome membrane. The protein localises to the cytoplasm. It catalyses the reaction folate(in) + H(+)(in) = folate(out) + H(+)(out). It carries out the reaction (6S)-5-methyl-5,6,7,8-tetrahydrofolate(in) + H(+)(in) = (6S)-5-methyl-5,6,7,8-tetrahydrofolate(out) + H(+)(out). The catalysed reaction is methotrexate(in) + H(+)(in) = methotrexate(out) + H(+)(out). The enzyme catalyses pemetrexed(in) + H(+)(in) = pemetrexed(out) + H(+)(out). Its activity is regulated as follows. In contrast to human ortholog, not inhibited by myricetin. Its function is as follows. Proton-coupled folate symporter that mediates folate absorption using an H(+) gradient as a driving force. Involved in the intestinal absorption of folates at the brush-border membrane of the proximal jejunum, and the transport from blood to cerebrospinal fluid across the choroid plexus. Functions at acidic pH via alternate outward- and inward-open conformation states. Protonation of residues in the outward open state primes the protein for transport. Binding of folate promotes breaking of salt bridge network and subsequent closure of the extracellular gate, leading to the inward-open state and release of protons and folate. Also able to transport antifolate drugs, such as methotrexate and pemetrexed. Involved in FOLR1-mediated endocytosis by serving as a route of export of folates from acidified endosomes. Also acts as a lower-affinity, pH-independent heme carrier protein and constitutes the main importer of heme in the intestine. Imports heme in the retina and retinal pigment epithelium, in neurons of the hippocampus, in hepatocytes and in the renal epithelial cells. Hence, participates in the trafficking of heme and increases intracellular iron content. In Rattus norvegicus (Rat), this protein is Proton-coupled folate transporter.